We begin with the raw amino-acid sequence, 469 residues long: Glutamate--tRNA ligase (469 aa).

The 'HIGH' region signature appears at 11–21; sequence PSPTGFIHLGN. The short motif at 243-247 is the 'KMSKS' region element; it reads KMSKR. Position 246 (K246) interacts with ATP.

The protein belongs to the class-I aminoacyl-tRNA synthetase family. Glutamate--tRNA ligase type 1 subfamily. Monomer.

The protein resides in the cytoplasm. It carries out the reaction tRNA(Glu) + L-glutamate + ATP = L-glutamyl-tRNA(Glu) + AMP + diphosphate. Functionally, catalyzes the attachment of glutamate to tRNA(Glu) in a two-step reaction: glutamate is first activated by ATP to form Glu-AMP and then transferred to the acceptor end of tRNA(Glu). The protein is Glutamate--tRNA ligase of Burkholderia lata (strain ATCC 17760 / DSM 23089 / LMG 22485 / NCIMB 9086 / R18194 / 383).